The primary structure comprises 110 residues: Thiosulfate sulfurtransferase GlpE (110 aa).

In terms of domain architecture, Rhodanese spans 17–105; sequence RENGAQVVDI…WRSVYPADTS (89 aa). Residue C65 is the Cysteine persulfide intermediate of the active site.

This sequence belongs to the GlpE family.

It is found in the cytoplasm. The enzyme catalyses thiosulfate + hydrogen cyanide = thiocyanate + sulfite + 2 H(+). The catalysed reaction is thiosulfate + [thioredoxin]-dithiol = [thioredoxin]-disulfide + hydrogen sulfide + sulfite + 2 H(+). Transferase that catalyzes the transfer of sulfur from thiosulfate to thiophilic acceptors such as cyanide or dithiols. May function in a CysM-independent thiosulfate assimilation pathway by catalyzing the conversion of thiosulfate to sulfite, which can then be used for L-cysteine biosynthesis. This is Thiosulfate sulfurtransferase GlpE from Pseudomonas paraeruginosa (strain DSM 24068 / PA7) (Pseudomonas aeruginosa (strain PA7)).